Here is a 196-residue protein sequence, read N- to C-terminus: Corticoliberin (196 aa).

Residues 1 to 24 (MRLPLLLSAGVLLVVSLPCPPCRA) form the signal peptide. Residues 25–153 (LLSRGPIPGA…RQETPERERR (129 aa)) constitute a propeptide that is removed on maturation. Residues 122–158 (PRRQLDSPAGPAERGEENALGSRQETPERERRSEEPP) are disordered. A compositionally biased stretch (basic and acidic residues) spans 146-156 (ETPERERRSEE). Isoleucine amide is present on Ile-194.

The protein belongs to the sauvagine/corticotropin-releasing factor/urotensin I family. Interacts (via C-terminus) with CRFR1 (via N-terminal extracellular domain). In terms of tissue distribution, produced by the hypothalamus.

Its subcellular location is the secreted. Hormone regulating the release of corticotropin from pituitary gland. Induces NLRP6 in intestinal epithelial cells, hence may influence gut microbiota profile. This is Corticoliberin (CRH) from Canis lupus familiaris (Dog).